We begin with the raw amino-acid sequence, 108 residues long: Cytochrome c oxidase subunit 1 (108 aa).

A helical transmembrane segment spans residues 10–30 (AFVAPVLGLLGFIPGGAGGIV). His-49 is a heme a3 binding site. A run of 2 helical transmembrane segments spans residues 50–70 (FHLQVASLVTLTAMGSLYWLL) and 85–105 (LGLAVVWLWFLGMMIMAVGLH). Residue His-51 participates in Fe(II)-heme a binding.

This sequence belongs to the heme-copper respiratory oxidase family. Heme serves as cofactor. Cu cation is required as a cofactor.

Its subcellular location is the cell membrane. The catalysed reaction is 4 Fe(II)-[cytochrome c] + O2 + 8 H(+)(in) = 4 Fe(III)-[cytochrome c] + 2 H2O + 4 H(+)(out). The protein operates within energy metabolism; oxidative phosphorylation. The chain is Cytochrome c oxidase subunit 1 (cbaA) from Thermus thermophilus.